A 146-amino-acid polypeptide reads, in one-letter code: 3-dehydroquinate dehydratase (146 aa).

The active-site Proton acceptor is the Tyr24. Substrate contacts are provided by Asn73, His79, and Asp86. Residue His99 is the Proton donor of the active site. Residues 100–101 (LS) and Arg110 each bind substrate.

It belongs to the type-II 3-dehydroquinase family. In terms of assembly, homododecamer.

The catalysed reaction is 3-dehydroquinate = 3-dehydroshikimate + H2O. The protein operates within metabolic intermediate biosynthesis; chorismate biosynthesis; chorismate from D-erythrose 4-phosphate and phosphoenolpyruvate: step 3/7. In terms of biological role, catalyzes a trans-dehydration via an enolate intermediate. This is 3-dehydroquinate dehydratase from Shewanella oneidensis (strain ATCC 700550 / JCM 31522 / CIP 106686 / LMG 19005 / NCIMB 14063 / MR-1).